The chain runs to 44 residues: Photosystem I reaction center subunit IX (44 aa).

Residues 7–27 (YLSVAPVLSTLWFGSLAGLLI) traverse the membrane as a helical segment.

This sequence belongs to the PsaJ family.

The protein localises to the plastid. It is found in the chloroplast thylakoid membrane. May help in the organization of the PsaE and PsaF subunits. This chain is Photosystem I reaction center subunit IX, found in Fagopyrum esculentum subsp. ancestrale (Wild buckwheat).